Consider the following 534-residue polypeptide: Glucans biosynthesis protein D (534 aa).

Residues 1–26 constitute a signal peptide (tat-type signal); that stretch reads MQRRDFIRNASLALAAFGLPSLPACA.

It belongs to the OpgD/OpgG family. Post-translationally, predicted to be exported by the Tat system. The position of the signal peptide cleavage has not been experimentally proven.

Its subcellular location is the periplasm. Its pathway is glycan metabolism; osmoregulated periplasmic glucan (OPG) biosynthesis. Its function is as follows. Probably involved in the control of the structural glucose backbone of osmoregulated periplasmic glucans (OPGs). The polypeptide is Glucans biosynthesis protein D (Stenotrophomonas maltophilia (strain K279a)).